Here is a 79-residue protein sequence, read N- to C-terminus: Anti-insect Ac4 (79 aa).

A signal peptide spans 1 to 17; that stretch reads MISLSLLLMIGVESVRD. An LCN-type CS-alpha/beta domain is found at 18-77; the sequence is GYIVDFKNCVYRCVPPCDGLCKKNGGKGGSCSFLIGSGLACWCNALPDNVPIKDPLHKCP. Intrachain disulfides connect Cys-26–Cys-76, Cys-30–Cys-48, Cys-34–Cys-58, and Cys-38–Cys-60.

The protein belongs to the long (4 C-C) scorpion toxin superfamily. Sodium channel inhibitor family. Alpha subfamily. In terms of tissue distribution, expressed by the venom gland.

The protein localises to the secreted. Alpha toxins bind voltage-independently at site-3 of sodium channels (Nav) and inhibit the inactivation of the activated channels, thereby blocking neuronal transmission. This protein is weakly toxic against insects (ED(50)&gt;2 ug per 100 mg of blowfly larvae), but is inactive against mammalian sodium channels (rNav1.2a, and rNav1.4). In Androctonus crassicauda (Arabian fat-tailed scorpion), this protein is Anti-insect Ac4.